The primary structure comprises 478 residues: Transcription factor PIF1 (478 aa).

T10 carries the phosphothreonine; by CK2 modification. Disordered regions lie at residues 56–80 (LHTK…QPSS), 122–144 (VSQV…PVRN), 172–210 (VRES…GGGA), 230–294 (TSSS…LSER), and 391–478 (TQTH…HTTG). The span at 69-80 (LPSMDPQQQPSS) shows a compositional bias: low complexity. Positions 179 to 189 (SPSATPSAAAS) are enriched in low complexity. T197 bears the Phosphothreonine; by CK2 mark. Residue S202 is modified to Phosphoserine; by CK2. Composition is skewed to basic and acidic residues over residues 238-272 (SEIE…ETKQ) and 284-294 (RAAEVHNLSER). The bHLH domain maps to 284–333 (RAAEVHNLSERKRRDRINERMKALQELIPRCNKSDKASMLDEAIEYMKSL). Positions 415-426 (PNQQYDPTSGQP) are enriched in polar residues. Phosphoserine; by CK2 is present on residues S464, S465, S466, and S469. Basic and acidic residues predominate over residues 465-478 (SSKESEDHGNHTTG).

Homodimer. Interacts with the photoactivated conformer (Pfr) of phytochromes A and B, PHYA and PHYB. Also interacts with APRR1/TOC1. Binds to RGL2, RGA and FHY3 (via N-terminus). Associates to PTAC12/HMR/PAP5 which acts as a transcriptional coactivator. Binds directly to PCH1 and PCHL; this interaction facilitates its association with phyB and its subsequent light-induced degradation. Phosphorylated at Thr-10, Thr-197, Ser-202, Ser-464, Ser-465, Ser-466 and Ser-469 by CK2. Phosphorylated and ubiquitinated after an exposure to light (especially red and far-red), in a phytochrome-dependent manner. Modified proteins undergo a proteasome-dependent degradation. Its stability and degradation plays a central role in photomorphogenesis of seedlings. In terms of tissue distribution, mainly expressed in leaves, stems and seedlings, and, to a lower extent, in fruits, flowers and roots.

The protein resides in the nucleus. DNA-binding ability is inhibited by PCH1 and PCHL to negatively regulate the expressions of its target genes. Transcription activator. Negatively regulates chlorophyll biosynthesis and seed germination in the dark, and lightinduced degradation of PIF1 relieves this negative regulation to promote photomorphogenesis. Binds to the G-box motif (5'-CACGTG-3') found in many light-regulated promoters. Promotes the expression of SOM, and thus modulates responses to abscisic acid (ABA) and gibberellic acid (GA). This chain is Transcription factor PIF1, found in Arabidopsis thaliana (Mouse-ear cress).